Reading from the N-terminus, the 267-residue chain is Geranylgeranylglyceryl phosphate synthase (267 aa).

2 residues coordinate Mg(2+): aspartate 23 and serine 52. Residues 173–179 (YLEAGSG), 205–206 (GG), and 227–228 (GT) contribute to the sn-glycerol 1-phosphate site.

It belongs to the GGGP/HepGP synthase family. Group II subfamily. Requires Mg(2+) as cofactor.

Its subcellular location is the cytoplasm. It carries out the reaction sn-glycerol 1-phosphate + (2E,6E,10E)-geranylgeranyl diphosphate = sn-3-O-(geranylgeranyl)glycerol 1-phosphate + diphosphate. It functions in the pathway membrane lipid metabolism; glycerophospholipid metabolism. Its function is as follows. Prenyltransferase that catalyzes the transfer of the geranylgeranyl moiety of geranylgeranyl diphosphate (GGPP) to the C3 hydroxyl of sn-glycerol-1-phosphate (G1P). This reaction is the first ether-bond-formation step in the biosynthesis of archaeal membrane lipids. The polypeptide is Geranylgeranylglyceryl phosphate synthase (Caldivirga maquilingensis (strain ATCC 700844 / DSM 13496 / JCM 10307 / IC-167)).